The primary structure comprises 653 residues: Golgi integral membrane protein 4 (653 aa).

G2 is lipidated: N-myristoyl glycine. Topologically, residues 2–12 (GNGMCSRKQKR) are cytoplasmic. Residues 13-33 (IFQTLLLLTVVFGFLYGAMLY) traverse the membrane as a helical; Signal-anchor for type II membrane protein segment. Over 34–653 (LELQTQLRKA…AEKSHRRAEM (620 aa)) the chain is Lumenal. The tract at residues 38–107 (TQLRKAEAVA…ETLNKGRQDS (70 aa)) is golgi targeting. Residues 66-216 (EHRSRLEKSL…KQLKDTLNRI (151 aa)) are a coiled coil. The interval 80–175 (LEHKKAKEDF…QELSKLKETV (96 aa)) is endosome targeting. Residues 122-143 (KSQHEELRKQHSDLEEEHRKQG) are disordered. Basic and acidic residues predominate over residues 123 to 143 (SQHEELRKQHSDLEEEHRKQG). The golgi targeting stretch occupies residues 176–220 (YNLREENRQLRKAHQDIHTQLQDVKTQVAEYKQLKDTLNRIPSFR). N229 is a glycosylation site (N-linked (GlcNAc...) asparagine). Residues 253-653 (QEGQQNHDAM…AEKSHRRAEM (401 aa)) form a disordered region. 5 stretches are compositionally biased toward basic and acidic residues: residues 261 to 270 (AMPRRMEEKP), 290 to 307 (EPRE…RKAL), 319 to 328 (EHLEEEHDPS), 348 to 360 (LDGR…EHST), and 381 to 398 (ARRD…EALH). Phosphoserine is present on S328. The span at 399–423 (QQRLHGQLLRQQQQQQYLAREMAQQ) shows a compositional bias: low complexity. Basic and acidic residues-rich tracts occupy residues 466–505 (AYDR…DRAA) and 527–545 (EQVR…KQSE). At S538 the chain carries Phosphoserine. Residues 565-587 (QQEDNVDEQYQEEGEEEVQEDLT) are compositionally biased toward acidic residues. At Y574 the chain carries Phosphotyrosine. T587 carries the post-translational modification Phosphothreonine. Residues 588–599 (EEKKRELEHNAE) are compositionally biased toward basic and acidic residues. At Y631 the chain carries Phosphotyrosine. Residues 631 to 640 (YEEEEDEEDG) are compositionally biased toward acidic residues.

It belongs to the GOLIM4 family. Phosphorylated by c-AMP-dependent kinases most probably in its lumenal part. In terms of processing, O-glycosylated; modified by sialic acid residues. Post-translationally, N-glycosylated; N-glycans are of the complex type and modified by sialic acid residues. Expressed in liver, pancreas and pituitary (at protein level).

The protein localises to the golgi apparatus. Its subcellular location is the golgi stack membrane. It is found in the endosome membrane. The protein resides in the membrane. Functionally, plays a role in endosome to Golgi protein trafficking; mediates protein transport along the late endosome-bypass pathway from the early endosome to the Golgi. This chain is Golgi integral membrane protein 4 (Golim4), found in Rattus norvegicus (Rat).